We begin with the raw amino-acid sequence, 143 residues long: Cold shock domain-containing protein CG9705 (143 aa).

Positions 1–30 (MTEPRTPEKLLAAKPPVLHHNSHSPNASLQ) are disordered. Phosphoserine is present on residues serine 22, serine 24, serine 28, and serine 33. In terms of domain architecture, CSD spans 54–121 (VVTGMVKSFS…KHQAVHVQIS (68 aa)). Residues serine 139 and serine 140 each carry the phosphoserine modification.

The protein is Cold shock domain-containing protein CG9705 of Drosophila melanogaster (Fruit fly).